Consider the following 447-residue polypeptide: Crotonyl-CoA reductase (447 aa).

Belongs to the zinc-containing alcohol dehydrogenase family. Crotonyl-CoA carboxylase/reductase subfamily. As to quaternary structure, homodimer.

The catalysed reaction is butanoyl-CoA + NADP(+) = (2E)-butenoyl-CoA + NADPH + H(+). With respect to regulation, inhibited by divalent cations (30-100%), beta-chloromercuribenzoate (85%), iodoacetamide (40%) and N-ethylmaleamide (80%). The presence of CoA thioesters containing 12-20 carbon atoms results in inhibition of enzyme activity. The greatest degree of inhibition is observed in the presence of palmitoyl-CoA and myristoyl-CoA. The branched-chain fatty acids, isopalmitoyl-CoA and isomyristoyl-CoA are less effective inhibitors of the crotonyl-CoA reductase. Concentrations of NADPH above 200 uM lead to inhibition of enzyme activity. Functionally, may play a role in supplying butyryl-CoA for straight-chain fatty acid biosynthesis. Catalyzes the conversion of crotonyl-CoA to butyryl-CoA. It shows a high substrate specificity for crotonyl-CoA, a short-chain-length (C4), but no measurable activity is observed with shorter (C3) or longer-chain-length enoyl-CoA thioesters. This is Crotonyl-CoA reductase (ccr) from Streptomyces collinus.